The sequence spans 302 residues: Putative S-adenosyl-L-methionine-dependent methyltransferase MAV_2803 (302 aa).

S-adenosyl-L-methionine contacts are provided by residues Asp129 and 158–159; that span reads DL.

The protein belongs to the UPF0677 family.

Exhibits S-adenosyl-L-methionine-dependent methyltransferase activity. This Mycobacterium avium (strain 104) protein is Putative S-adenosyl-L-methionine-dependent methyltransferase MAV_2803.